The chain runs to 466 residues: Argininosuccinate lyase (466 aa).

It belongs to the lyase 1 family. Argininosuccinate lyase subfamily.

It localises to the cytoplasm. It carries out the reaction 2-(N(omega)-L-arginino)succinate = fumarate + L-arginine. It participates in amino-acid biosynthesis; L-arginine biosynthesis; L-arginine from L-ornithine and carbamoyl phosphate: step 3/3. The polypeptide is Argininosuccinate lyase (Synechococcus elongatus (strain ATCC 33912 / PCC 7942 / FACHB-805) (Anacystis nidulans R2)).